The primary structure comprises 363 residues: Isopentenyl-diphosphate delta-isomerase (363 aa).

Residue 15–16 (RK) participates in substrate binding. FMN contacts are provided by residues Ser73, 74–76 (SMT), Ser104, and Asn133. 104 to 106 (SMR) contributes to the substrate binding site. Substrate is bound at residue Gln168. Glu169 contributes to the Mg(2+) binding site. Residues Lys200, Thr230, and 313–314 (AG) contribute to the FMN site.

This sequence belongs to the IPP isomerase type 2 family. Homooctamer. Dimer of tetramers. The cofactor is FMN. It depends on NADPH as a cofactor. Mg(2+) serves as cofactor.

The protein resides in the cytoplasm. It catalyses the reaction isopentenyl diphosphate = dimethylallyl diphosphate. In terms of biological role, involved in the biosynthesis of isoprenoids. Catalyzes the 1,3-allylic rearrangement of the homoallylic substrate isopentenyl (IPP) to its allylic isomer, dimethylallyl diphosphate (DMAPP). The chain is Isopentenyl-diphosphate delta-isomerase from Chlorobium phaeobacteroides (strain DSM 266 / SMG 266 / 2430).